Reading from the N-terminus, the 695-residue chain is tRNA wybutosine-synthesizing protein 4 (695 aa).

Residues Lys38, Arg88, Gly115, 146-147 (DY), 196-197 (DL), and Glu224 contribute to the S-adenosyl-L-methionine site. The Proton donor; for both methylation and methoxycarbonylation activities role is filled by Arg88. The active-site Proton acceptor; for methoxycarbonylation activity is the Tyr229.

The protein belongs to the methyltransferase superfamily. LCMT family.

Its subcellular location is the cytoplasm. The protein resides in the mitochondrion. The enzyme catalyses 7-[(3S)-3-amino-3-carboxypropyl]wyosine(37) in tRNA(Phe) + S-adenosyl-L-methionine = 7-[(3S)-(3-amino-3-methoxycarbonyl)propyl]wyosine(37) in tRNA(Phe) + S-adenosyl-L-homocysteine. The catalysed reaction is 7-[(3S)-(3-amino-3-methoxycarbonyl)propyl]wyosine(37) in tRNA(Phe) + S-adenosyl-L-methionine + CO2 = wybutosine(37) in tRNA(Phe) + S-adenosyl-L-homocysteine + 2 H(+). The protein operates within tRNA modification; wybutosine-tRNA(Phe) biosynthesis. S-adenosyl-L-methionine-dependent methyltransferase that acts as a component of the wybutosine biosynthesis pathway. Wybutosine is a hyper modified guanosine with a tricyclic base found at the 3'-position adjacent to the anticodon of eukaryotic phenylalanine tRNA. Catalyzes the final 2 independent reactions, methylation of the alpha-carboxy group of wybutosine-72 to form wybutosine-58, and methoxycarbonylation of alpha-amino group of wybutosine-58 through the fixation of CO(2) to complete wybutosine. The protein is tRNA wybutosine-synthesizing protein 4 (PPM2) of Saccharomyces cerevisiae (strain ATCC 204508 / S288c) (Baker's yeast).